The chain runs to 202 residues: uncharacterized protein (202 aa).

An HTH tetR-type domain is found at 13-73; it reads ELAADRILDA…AYVHRETRRL (61 aa). A DNA-binding region (H-T-H motif) is located at residues 36–55; the sequence is GMNEIAKAAGCSRATLYRYF.

This is an uncharacterized protein from Mycobacterium tuberculosis (strain CDC 1551 / Oshkosh).